Here is a 410-residue protein sequence, read N- to C-terminus: Transcription factor Dp-1 (410 aa).

K3 is modified (N6-acetyllysine). S23 carries the post-translational modification Phosphoserine; by CDK2. Residues 77–114 (VVGSPHTPNTHFVSQNQPSDPSPWSAGKRNRKGEKNGK) form a disordered region. Positions 82–95 (HTPNTHFVSQNQPS) are enriched in polar residues. A compositionally biased stretch (basic residues) spans 104 to 114 (KRNRKGEKNGK). Residues 105–127 (RNRKGEKNGKGLRHFSMKVCEKV) are interaction with CEBPA. The DNA-binding element occupies 113-195 (GKGLRHFSMK…KKEIKWIGLP (83 aa)). Residues 161-195 (DQKNIRRRVYDALNVLMAMNIISKEKKEIKWIGLP) carry the DEF box motif. The segment at 204–277 (SLEVERQRRL…KKTVIDCSIS (74 aa)) is dimerization. The interval 211–327 (RRLERIKQKQ…DLRVARSLVP (117 aa)) is enhances binding of RB protein to E2F. Positions 214 to 246 (ERIKQKQSQLQELILQQIAFKNLVQRNRQVEQQ) are DCB1. The DCB2 stretch occupies residues 259–315 (LPFIIVNTSKKTVIDCSISNDKFEYLFNFDNTFEIHDDIEVLKRMGMACGLESGSCS). Positions 370–410 (GALATSSSGSQYSGSRVETPVSCVGEDDEDDEDFNENEEED) are disordered. The segment covering 375 to 384 (SSSGSQYSGS) has biased composition (low complexity). Residues 394–410 (GEDDEDDEDFNENEEED) show a composition bias toward acidic residues.

Belongs to the E2F/DP family. In terms of assembly, component of the E2F:DP transcription factor complex. Forms heterodimers with E2F family members. The complex can interact with hypophosphorylated retinoblastoma protein RB1 and related proteins (RBL1 and RBL2) that inhibit the E2F transactivation domain. This repression involves recruitment of histone deacetylase (HDAC). During the cell cycle, from mid-to-late G1 phase, RB family members become phosphorylated, detach from the DRTF1/E2F complex to render E2F transcriptionally active. Part of the E2F6.com-1 complex in G0 phase is composed of E2F6, MGA, MAX, TFDP1, CBX3, BAT8, EUHMTASE1, RING1, RNF2, MBLR, L3MBTL2 YAF2. Component of the DREAM complex (also named LINC complex) at least composed of E2F4, E2F5, LIN9, LIN37, LIN52, LIN54, MYBL1, MYBL2, RBL1, RBL2, RBBP4, TFDP1 and TFDP2. The complex exists in quiescent cells where it represses cell cycle-dependent genes. It dissociates in S phase when LIN9, LIN37, LIN52 and LIN54 form a subcomplex that binds to MYBL2. The complex TFDP1:E2F1 interacts with CEBPA; the interaction prevents CEBPA binding to target gene promoters and represses its transcriptional activity. Post-translationally, ubiquitinated by the BCR(KBTBD5) complex, leading to its subsequent degradation. In terms of processing, phosphorylation by E2F1-bound cyclin A-CDK2, in the S phase, inhibits E2F-mediated DNA binding and transactivation.

It localises to the nucleus. The protein localises to the cytoplasm. Can stimulate E2F-dependent transcription. Binds DNA cooperatively with E2F family members through the E2 recognition site, 5'-TTTC[CG]CGC-3', found in the promoter region of a number of genes whose products are involved in cell cycle regulation or in DNA replication. The E2F1:DP complex appears to mediate both cell proliferation and apoptosis. Blocks adipocyte differentiation by repressing CEBPA binding to its target gene promoters. The protein is Transcription factor Dp-1 (TFDP1) of Bos taurus (Bovine).